The chain runs to 409 residues: Elongation factor Tu (409 aa).

The tr-type G domain maps to 10–214; it reads KPHLNIGTIG…AVDSFIPTPE (205 aa). Positions 19 to 26 are G1; sequence GHVDHGKT. 19–26 is a binding site for GTP; the sequence is GHVDHGKT. Threonine 26 provides a ligand contact to Mg(2+). Residues 60-64 are G2; it reads GITIN. Residues 81 to 84 form a G3 region; it reads DCPG. Residues 81 to 85 and 136 to 139 each bind GTP; these read DCPGH and NKED. The tract at residues 136-139 is G4; that stretch reads NKED. The interval 174 to 176 is G5; sequence SGL.

It belongs to the TRAFAC class translation factor GTPase superfamily. Classic translation factor GTPase family. EF-Tu/EF-1A subfamily. As to quaternary structure, monomer.

It localises to the cytoplasm. It catalyses the reaction GTP + H2O = GDP + phosphate + H(+). GTP hydrolase that promotes the GTP-dependent binding of aminoacyl-tRNA to the A-site of ribosomes during protein biosynthesis. The protein is Elongation factor Tu of Nostoc punctiforme (strain ATCC 29133 / PCC 73102).